The chain runs to 270 residues: Mediator of RNA polymerase II transcription subunit 4 (270 aa).

The interval 1–25 is disordered; sequence MAAASSGEKEKERPGGGLGAAGGNS. An N-acetylalanine modification is found at alanine 2. Coiled-coil stretches lie at residues 24–48 and 90–131; these read NSTR…IEML and HHEM…AKEK. The residue at position 32 (serine 32) is a Phosphoserine. Positions 231–270 are disordered; sequence MLPPNHSHDFLLEPPGHNKENEDDVEVMSTDSSSSSSDSD. Positions 236 to 250 are enriched in basic and acidic residues; that stretch reads HSHDFLLEPPGHNKE. Residues 259 to 270 are compositionally biased toward low complexity; it reads STDSSSSSSDSD.

It belongs to the Mediator complex subunit 4 family. As to quaternary structure, component of the Mediator complex, which is composed of MED1, MED4, MED6, MED7, MED8, MED9, MED10, MED11, MED12, MED13, MED13L, MED14, MED15, MED16, MED17, MED18, MED19, MED20, MED21, MED22, MED23, MED24, MED25, MED26, MED27, MED29, MED30, MED31, CCNC, CDK8 and CDC2L6/CDK11. The MED12, MED13, CCNC and CDK8 subunits form a distinct module termed the CDK8 module. Mediator containing the CDK8 module is less active than Mediator lacking this module in supporting transcriptional activation. Individual preparations of the Mediator complex lacking one or more distinct subunits have been variously termed ARC, CRSP, DRIP, PC2, SMCC and TRAP.

It localises to the nucleus. Functionally, component of the Mediator complex, a coactivator involved in the regulated transcription of nearly all RNA polymerase II-dependent genes. Mediator functions as a bridge to convey information from gene-specific regulatory proteins to the basal RNA polymerase II transcription machinery. Mediator is recruited to promoters by direct interactions with regulatory proteins and serves as a scaffold for the assembly of a functional preinitiation complex with RNA polymerase II and the general transcription factors. In Bos taurus (Bovine), this protein is Mediator of RNA polymerase II transcription subunit 4 (MED4).